The sequence spans 188 residues: dCTP deaminase (188 aa).

DCTP is bound by residues 111-116 (KSTYAR), 135-137 (TLE), Gln-156, Tyr-170, Lys-179, and Gln-180. Residue Glu-137 is the Proton donor/acceptor of the active site.

Belongs to the dCTP deaminase family. As to quaternary structure, homotrimer.

The enzyme catalyses dCTP + H2O + H(+) = dUTP + NH4(+). The protein operates within pyrimidine metabolism; dUMP biosynthesis; dUMP from dCTP (dUTP route): step 1/2. Functionally, catalyzes the deamination of dCTP to dUTP. This is dCTP deaminase from Rickettsia typhi (strain ATCC VR-144 / Wilmington).